A 514-amino-acid chain; its full sequence is GTPase Obg (514 aa).

Residues Ala2–Val159 form the Obg domain. A disordered region spans residues Arg62–Glu88. The span at Gly76 to Glu85 shows a compositional bias: basic and acidic residues. Residues Ala160–Glu336 form the OBG-type G domain. GTP contacts are provided by residues Gly166 to Ser173, Phe191 to His195, Asp212 to Gly215, Asn288 to Asp291, and Ser317 to Val319. Ser173 and Thr193 together coordinate Mg(2+). An OCT domain is found at Pro356–Pro440.

This sequence belongs to the TRAFAC class OBG-HflX-like GTPase superfamily. OBG GTPase family. In terms of assembly, monomer. Mg(2+) is required as a cofactor.

It localises to the cytoplasm. An essential GTPase which binds GTP, GDP and possibly (p)ppGpp with moderate affinity, with high nucleotide exchange rates and a fairly low GTP hydrolysis rate. Plays a role in control of the cell cycle, stress response, ribosome biogenesis and in those bacteria that undergo differentiation, in morphogenesis control. The polypeptide is GTPase Obg (Leifsonia xyli subsp. xyli (strain CTCB07)).